Consider the following 369-residue polypeptide: Erythronate-4-phosphate dehydrogenase (369 aa).

Substrate-binding residues include Ser-45 and Thr-66. Asp-146 provides a ligand contact to NAD(+). Arg-209 is an active-site residue. Asp-233 contacts NAD(+). Glu-238 is a catalytic residue. Residue His-255 is the Proton donor of the active site. Gly-258 serves as a coordination point for NAD(+).

The protein belongs to the D-isomer specific 2-hydroxyacid dehydrogenase family. PdxB subfamily. In terms of assembly, homodimer.

The protein resides in the cytoplasm. The catalysed reaction is 4-phospho-D-erythronate + NAD(+) = (R)-3-hydroxy-2-oxo-4-phosphooxybutanoate + NADH + H(+). It participates in cofactor biosynthesis; pyridoxine 5'-phosphate biosynthesis; pyridoxine 5'-phosphate from D-erythrose 4-phosphate: step 2/5. In terms of biological role, catalyzes the oxidation of erythronate-4-phosphate to 3-hydroxy-2-oxo-4-phosphonooxybutanoate. The protein is Erythronate-4-phosphate dehydrogenase of Porphyromonas gingivalis (strain ATCC BAA-308 / W83).